Here is a 221-residue protein sequence, read N- to C-terminus: 3-dehydroquinate dehydratase (221 aa).

Residues 33–35 (EIR) and Arg63 each bind 3-dehydroquinate. His118 (proton donor/acceptor) is an active-site residue. Lys144 (schiff-base intermediate with substrate) is an active-site residue. 3-dehydroquinate-binding residues include Arg181, Thr200, and Gln204.

It belongs to the type-I 3-dehydroquinase family. In terms of assembly, homodimer.

The enzyme catalyses 3-dehydroquinate = 3-dehydroshikimate + H2O. It participates in metabolic intermediate biosynthesis; chorismate biosynthesis; chorismate from D-erythrose 4-phosphate and phosphoenolpyruvate: step 3/7. Functionally, involved in the third step of the chorismate pathway, which leads to the biosynthesis of aromatic amino acids. Catalyzes the cis-dehydration of 3-dehydroquinate (DHQ) and introduces the first double bond of the aromatic ring to yield 3-dehydroshikimate. This Methanothermobacter thermautotrophicus (strain ATCC 29096 / DSM 1053 / JCM 10044 / NBRC 100330 / Delta H) (Methanobacterium thermoautotrophicum) protein is 3-dehydroquinate dehydratase.